The primary structure comprises 227 residues: Extracellular small neutral protease (227 aa).

Positions 1-29 are cleaved as a signal peptide; it reads MRITLPLLSTAVGLGLTAAVLGTGPAATA. A propeptide spanning residues 30-42 is cleaved from the precursor; the sequence is AAPQEPVRAAQLG. Asp-156 and Thr-158 together coordinate Ca(2+). Zn(2+) is bound at residue His-163. Residue Glu-164 is part of the active site. Zn(2+) is bound by residues His-167 and Asp-173. A disulfide bridge links Cys-179 with Cys-192.

Belongs to the peptidase M7 family. Requires Ca(2+) as cofactor. Zn(2+) serves as cofactor. The N-terminus is blocked.

Its subcellular location is the secreted. The enzyme catalyses Hydrolyzes proteins with a preference for Tyr or Phe in the P1' position. Has no action on amino-acid p-nitroanilides.. The chain is Extracellular small neutral protease (snpA) from Streptomyces lividans.